The following is a 95-amino-acid chain: Histone-like DNA-binding protein (95 aa).

It belongs to the bacterial histone-like protein family.

In Rickettsia typhi (strain ATCC VR-144 / Wilmington), this protein is Histone-like DNA-binding protein.